Consider the following 590-residue polypeptide: Myo-inositol transporter 3C (590 aa).

Over 1-63 the chain is Cytoplasmic; that stretch reads MSRTPSSLDK…GEDKVTPYLC (63 aa). A helical membrane pass occupies residues 64–86; it reads FLISASAIAGFLFGYDTGVVGVA. The Extracellular portion of the chain corresponds to 87 to 105; it reads LPLVGTDLGGSVLSSSQQE. Residues 106 to 126 traverse the membrane as a helical segment; that stretch reads IITAGTTIGAIFGSAILGGWG. Topologically, residues 127–132 are cytoplasmic; sequence DRLGRK. A helical membrane pass occupies residues 133 to 153; the sequence is VAILIADVFFTVGAVLIAASY. Residues 154–162 are Extracellular-facing; it reads SVPQMIVGR. A helical transmembrane segment spans residues 163–183; that stretch reads IVLGVGVGGAAAIAPLFITET. The Cytoplasmic portion of the chain corresponds to 184–192; it reads APTAVRGRC. A helical membrane pass occupies residues 193–213; sequence IGVNAFFIPFGQVISEAIGAG. Residues 214-222 lie on the Extracellular side of the membrane; sequence VQDMKNGWR. Residues 223 to 243 traverse the membrane as a helical segment; it reads LLFALGAVPSLFQLILFHYLP. Residues 244 to 325 lie on the Cytoplasmic side of the membrane; sequence ESPRILILRG…TVSLIQMAGQ (82 aa). A helical transmembrane segment spans residues 326–346; sequence LSGFNTLLYYAGTLFSLLGLT. The Extracellular portion of the chain corresponds to 347–349; that stretch reads NPA. The chain crosses the membrane as a helical span at residues 350-370; the sequence is LGGLIPAGTNAFFVLVGMTLV. Topologically, residues 371-376 are cytoplasmic; the sequence is DKVGRR. Residues 377 to 397 form a helical membrane-spanning segment; it reads GLLMFGVPIMLAGLVWNIVAF. The Extracellular portion of the chain corresponds to 398-417; it reads HYLCIPTGGLLDTSYKYDTK. The helical transmembrane segment at 418 to 438 threads the bilayer; it reads LVGIVIGGIVFFTTGFGLTYS. The Cytoplasmic portion of the chain corresponds to 439–454; sequence HLAWYQSEFLALEVRS. Residues 455–475 form a helical membrane-spanning segment; sequence VGSGIATTANWVANLVVSVSY. The Extracellular segment spans residues 476–485; it reads LTELETLTPS. The chain crosses the membrane as a helical span at residues 486–506; the sequence is GTYGLYLGFSVVFFIFAVFCY. Over 507–590 the chain is Cytoplasmic; the sequence is PETKQLSIDE…NGAKRFPISR (84 aa).

Belongs to the major facilitator superfamily. Sugar transporter (TC 2.A.1.1) family.

The protein resides in the cell membrane. The enzyme catalyses myo-inositol(out) + H(+)(out) = myo-inositol(in) + H(+)(in). In terms of biological role, major transporter for myo-inositol. Plays a role in the traversal of the host blood-brain barrier. The polypeptide is Myo-inositol transporter 3C (Cryptococcus neoformans var. grubii serotype A (strain H99 / ATCC 208821 / CBS 10515 / FGSC 9487) (Filobasidiella neoformans var. grubii)).